The following is a 680-amino-acid chain: Pescadillo homolog (680 aa).

The segment at 315 to 336 (GEDEKPKAITNGEGESETPTDA) is disordered. Residues 359–471 (DPSQLFANCT…ELKEPNQYAP (113 aa)) form the BRCT domain. Residues 494 to 680 (VPLEEQQTEA…ERKMAKGKAT (187 aa)) form a disordered region. Acidic residues-rich tracts occupy residues 511–530 (DVED…DDEA), 543–556 (GSDD…EEAD), and 565–576 (AEVDDASEDDEQ). 3 stretches are compositionally biased toward basic and acidic residues: residues 597–610 (KASE…DPKS), 617–635 (RKEL…ERAK), and 654–664 (NKKDAESEKLR). Positions 609 to 680 (KSKAKQQKRK…ERKMAKGKAT (72 aa)) form a coiled coil. The segment covering 665 to 680 (EKRRRIERKMAKGKAT) has biased composition (basic residues).

This sequence belongs to the pescadillo family. As to quaternary structure, component of the NOP7 complex, composed of ERB1, NOP7 and YTM1. The complex is held together by ERB1, which interacts with NOP7 via its N-terminal domain and with YTM1 via a high-affinity interaction between the seven-bladed beta-propeller domains of the 2 proteins. The NOP7 complex associates with the 66S pre-ribosome.

The protein localises to the nucleus. The protein resides in the nucleolus. It localises to the nucleoplasm. Functionally, component of the NOP7 complex, which is required for maturation of the 25S and 5.8S ribosomal RNAs and formation of the 60S ribosome. This is Pescadillo homolog from Pyricularia oryzae (strain 70-15 / ATCC MYA-4617 / FGSC 8958) (Rice blast fungus).